The chain runs to 142 residues: Neurofilament heavy polypeptide (142 aa).

The IF rod domain maps to 1 to 142 (MRGAVLRLGA…EAAKVNTDAM (142 aa)). The stretch at 26-74 (IAHVRQRLDDEARQRQEAEAAARALARFAQEAEAARVELQKKAQALQEE) forms a coiled coil.

This sequence belongs to the intermediate filament family. In terms of assembly, forms heterodimers with NEFL; which can further hetero-oligomerize (in vitro). Forms heterodimers with INA (in vitro). In terms of processing, there are a number of repeats of the tripeptide K-S-P, NFH is phosphorylated on a number of the serines in this motif. It is thought that phosphorylation of NFH results in the formation of interfilament cross bridges that are important in the maintenance of axonal caliber. Post-translationally, phosphorylation seems to play a major role in the functioning of the larger neurofilament polypeptides (NF-M and NF-H), the levels of phosphorylation being altered developmentally and coincidentally with a change in the neurofilament function. Phosphorylated in the head and rod regions by the PKC kinase PKN1, leading to the inhibition of polymerization.

Its subcellular location is the cytoplasm. The protein resides in the cytoskeleton. It localises to the cell projection. It is found in the axon. In terms of biological role, neurofilaments usually contain three intermediate filament proteins: NEFL, NEFM, and NEFH which are involved in the maintenance of neuronal caliber. NEFH has an important function in mature axons that is not subserved by the two smaller NF proteins. May additionally cooperate with the neuronal intermediate filament proteins PRPH and INA to form neuronal filamentous networks. This Sus scrofa (Pig) protein is Neurofilament heavy polypeptide (NEFH).